The chain runs to 309 residues: 1,4-dihydroxy-2-naphthoyl-CoA synthase (309 aa).

Substrate contacts are provided by residues Arg53, 98–102 (SGGDQ), Tyr110, 152–156 (WAAGG), Thr179, Ser185, Tyr282, and Lys297.

This sequence belongs to the enoyl-CoA hydratase/isomerase family. MenB subfamily.

It carries out the reaction 2-succinylbenzoyl-CoA + H(+) = 1,4-dihydroxy-2-naphthoyl-CoA + H2O. It functions in the pathway quinol/quinone metabolism; 1,4-dihydroxy-2-naphthoate biosynthesis; 1,4-dihydroxy-2-naphthoate from chorismate: step 6/7. The protein operates within quinol/quinone metabolism; menaquinone biosynthesis. Functionally, converts o-succinylbenzoyl-CoA (OSB-CoA) to 1,4-dihydroxy-2-naphthoyl-CoA (DHNA-CoA). The polypeptide is 1,4-dihydroxy-2-naphthoyl-CoA synthase (Mycolicibacterium smegmatis (strain ATCC 700084 / mc(2)155) (Mycobacterium smegmatis)).